A 234-amino-acid chain; its full sequence is Probable transcriptional regulatory protein Pfl01_3677 (234 aa).

It belongs to the TACO1 family.

It localises to the cytoplasm. This chain is Probable transcriptional regulatory protein Pfl01_3677, found in Pseudomonas fluorescens (strain Pf0-1).